The chain runs to 226 residues: Protein DVU_0532 (226 aa).

6 consecutive transmembrane segments (helical) span residues 1 to 23 (MYAFLTGPMLWASLLVFFGGLLA), 46 to 57 (AIGLQGAVQSAL), 73 to 99 (FFTVAFFLFHIGAVLVPLFLAGHNVIL), 112 to 131 (MGVADTLTVLAIIGLVMIAL), 141 to 164 (ILTTGYDWFILAVSAAPFVTGFLA), and 194 to 222 (LSHIVLFFMSRGQLGMDYAIKRGGATRGP).

Requires heme b as cofactor.

The protein resides in the cell membrane. In terms of biological role, HMWC (high-molecular-weight cytochrome c), ORF2, ORF3, ORF4, ORF5 and ORF6 in the HMC operon form a transmembrane protein complex that allows electron flow from the periplasmic hydrogenase to the cytoplasmic enzymes that catalyze reduction of sulfates. This Nitratidesulfovibrio vulgaris (strain ATCC 29579 / DSM 644 / CCUG 34227 / NCIMB 8303 / VKM B-1760 / Hildenborough) (Desulfovibrio vulgaris) protein is Protein DVU_0532.